The sequence spans 87 residues: Apoptosis inducing factor BLCAP B (87 aa).

The next 2 membrane-spanning stretches (helical) occupy residues 19 to 39 (PALWFSHSVFMGFYLLSFLLE) and 43 to 63 (CTICALVFLGALFLICYSCWG).

Belongs to the BLCAP family.

The protein localises to the cytoplasm. The protein resides in the nucleus. It is found in the membrane. Its function is as follows. Acts as a tumor suppressor; induces growth arrest at G(1)/S checkpoint and apoptosis via RB1-dependent and p53/TP53- and NF-kappa-B-independent mechanisms. Modulates expression of genes involved in the regulation of proliferation, cell cycle and apoptosis. This is Apoptosis inducing factor BLCAP B (blcap-b) from Xenopus laevis (African clawed frog).